A 531-amino-acid chain; its full sequence is Chaperonin GroEL, chloroplastic (531 aa).

ATP-binding positions include 30–33 (TLGP), 87–91 (DGTTT), Gly415, 481–483 (NAA), and Asp497.

This sequence belongs to the chaperonin (HSP60) family. In terms of assembly, forms a cylinder of 14 subunits composed of two heptameric rings stacked back-to-back. Interacts with the co-chaperonin GroES.

Its subcellular location is the plastid. It localises to the chloroplast. It catalyses the reaction ATP + H2O + a folded polypeptide = ADP + phosphate + an unfolded polypeptide.. Functionally, together with its co-chaperonin GroES, plays an essential role in assisting protein folding. The GroEL-GroES system forms a nano-cage that allows encapsulation of the non-native substrate proteins and provides a physical environment optimized to promote and accelerate protein folding. The sequence is that of Chaperonin GroEL, chloroplastic from Emiliania huxleyi (Coccolithophore).